Consider the following 89-residue polypeptide: Small ribosomal subunit protein uS15 (89 aa).

The protein belongs to the universal ribosomal protein uS15 family. In terms of assembly, part of the 30S ribosomal subunit. Forms a bridge to the 50S subunit in the 70S ribosome, contacting the 23S rRNA.

Functionally, one of the primary rRNA binding proteins, it binds directly to 16S rRNA where it helps nucleate assembly of the platform of the 30S subunit by binding and bridging several RNA helices of the 16S rRNA. In terms of biological role, forms an intersubunit bridge (bridge B4) with the 23S rRNA of the 50S subunit in the ribosome. The polypeptide is Small ribosomal subunit protein uS15 (Nitrosospira multiformis (strain ATCC 25196 / NCIMB 11849 / C 71)).